Reading from the N-terminus, the 229-residue chain is ATP synthase subunit a (229 aa).

6 consecutive transmembrane segments (helical) span residues 25 to 45 (ADAI…SILA), 82 to 102 (FFPL…IGLI), 111 to 131 (NINT…IVGI), 142 to 162 (FLGP…IGHF), 181 to 201 (LVLM…MMLM), and 202 to 222 (GVLV…IYIQ).

This sequence belongs to the ATPase A chain family. F-type ATPases have 2 components, CF(1) - the catalytic core - and CF(0) - the membrane proton channel. CF(1) has five subunits: alpha(3), beta(3), gamma(1), delta(1), epsilon(1). CF(0) has three main subunits: a(1), b(2) and c(9-12). The alpha and beta chains form an alternating ring which encloses part of the gamma chain. CF(1) is attached to CF(0) by a central stalk formed by the gamma and epsilon chains, while a peripheral stalk is formed by the delta and b chains.

It is found in the cell inner membrane. Functionally, key component of the proton channel; it plays a direct role in the translocation of protons across the membrane. This is ATP synthase subunit a from Geotalea daltonii (strain DSM 22248 / JCM 15807 / FRC-32) (Geobacter daltonii).